A 1451-amino-acid polypeptide reads, in one-letter code: Dual 3',5'-cyclic-AMP and -GMP phosphodiesterase 11 (1451 aa).

Disordered stretches follow at residues 1–54, 75–100, 125–169, 235–262, and 327–374; these read MGQA…PQIQ, ATTPLQFQPTGRMNTEQGGTGYGGYG, LPAH…QVQQ, GNDVVSSTSPTHANGQTSSSRGGSGATT, and QHHH…GSGG. The segment covering 11–21 has biased composition (basic residues); the sequence is RGCRYKNKNKS. A compositionally biased stretch (low complexity) spans 24–45; the sequence is QQQQQQQQQQQQQQQHQQQQQQ. Over residues 77 to 91 the composition is skewed to polar residues; that stretch reads TPLQFQPTGRMNTEQ. Low complexity-rich tracts occupy residues 135-147 and 160-169; these read SGAAPPSSSNGSS and QQQQQYQVQQ. Over residues 235 to 248 the composition is skewed to polar residues; it reads GNDVVSSTSPTHAN. Residues 327–340 are compositionally biased toward basic residues; that stretch reads QHHHNHAHLHHSQH. Positions 341 to 355 are enriched in low complexity; that stretch reads SHYQAGGAVGSSSLG. Over residues 356 to 374 the composition is skewed to gly residues; the sequence is STGGASGAGGAPSLGGSGG. GAF domains follow at residues 419–572 and 604–754; these read EVRT…GIGL and TIEH…GMGI. Residues 783-1107 enclose the PDEase domain; it reads ATMDEAHRLR…GHWIDLADVV (325 aa). Residue His-860 is the Proton donor of the active site. Positions 864, 900, 901, and 1011 each coordinate a divalent metal cation. Disordered stretches follow at residues 1109–1171, 1200–1248, 1268–1305, and 1325–1364; these read TKTS…SNTN, DEQA…TPVS, QTSNQAQTQKQRCKSCDHSRSGLQVRKTSSLRGAQELD, and INNHSHHHNHSHSHNHNHHHHHHHHSHHNHSQHGIGIGSA. Low complexity-rich tracts occupy residues 1142-1171 and 1218-1234; these read ASEAEVAVDSPSEKASVNGSNVANNSSNTN and CRSNSTCSSSTASSCLS. Residues 1268–1277 are compositionally biased toward polar residues; that stretch reads QTSNQAQTQK. Residues 1328-1355 show a composition bias toward basic residues; the sequence is HSHHHNHSHSHNHNHHHHHHHHSHHNHS.

This sequence belongs to the cyclic nucleotide phosphodiesterase family. A divalent metal cation serves as cofactor. In terms of tissue distribution, in adults, it is enriched in Malpighian tubules.

The catalysed reaction is 3',5'-cyclic GMP + H2O = GMP + H(+). It catalyses the reaction 3',5'-cyclic AMP + H2O = AMP + H(+). Functionally, plays a role in signal transduction by regulating the intracellular concentration of cyclic nucleotides cAMP and cGMP. Dual-specificity phosphodiesterase that catalyzes the hydrolysis of both cAMP and cGMP to 5'-AMP and 5'-GMP, respectively. The polypeptide is Dual 3',5'-cyclic-AMP and -GMP phosphodiesterase 11 (Pde11) (Drosophila melanogaster (Fruit fly)).